The primary structure comprises 634 residues: Chaperone protein DnaK (634 aa).

Position 197 is a phosphothreonine; by autocatalysis (T197). Residues 592 to 634 form a disordered region; sequence IGSSVYQQPGNQPPAPGGPNANASDDKGPDDDVIDADFTETKD. The segment covering 619 to 634 has biased composition (acidic residues); the sequence is GPDDDVIDADFTETKD.

This sequence belongs to the heat shock protein 70 family.

Acts as a chaperone. In Prochlorococcus marinus (strain MIT 9515), this protein is Chaperone protein DnaK.